We begin with the raw amino-acid sequence, 400 residues long: Acetate kinase (400 aa).

A Mg(2+)-binding site is contributed by Asn8. ATP is bound at residue Lys15. Arg89 is a binding site for substrate. Asp146 acts as the Proton donor/acceptor in catalysis. Residues 206–210 (HVGNG), 283–285 (DMR), and 331–335 (GMGEN) contribute to the ATP site. A Mg(2+)-binding site is contributed by Glu383.

The protein belongs to the acetokinase family. As to quaternary structure, homodimer. Mg(2+) serves as cofactor. The cofactor is Mn(2+).

Its subcellular location is the cytoplasm. It catalyses the reaction acetate + ATP = acetyl phosphate + ADP. The protein operates within metabolic intermediate biosynthesis; acetyl-CoA biosynthesis; acetyl-CoA from acetate: step 1/2. Its function is as follows. Catalyzes the formation of acetyl phosphate from acetate and ATP. Can also catalyze the reverse reaction. The sequence is that of Acetate kinase from Streptococcus equi subsp. zooepidemicus (strain MGCS10565).